Here is a 189-residue protein sequence, read N- to C-terminus: Elongation factor P (189 aa).

Lys34 carries the N6-(3,6-diaminohexanoyl)-5-hydroxylysine modification.

Belongs to the elongation factor P family. Post-translationally, may be beta-lysylated on the epsilon-amino group of Lys-34 by the combined action of EpmA and EpmB, and then hydroxylated on the C5 position of the same residue by EpmC (if this protein is present). Lysylation is critical for the stimulatory effect of EF-P on peptide-bond formation. The lysylation moiety may extend toward the peptidyltransferase center and stabilize the terminal 3-CCA end of the tRNA. Hydroxylation of the C5 position on Lys-34 may allow additional potential stabilizing hydrogen-bond interactions with the P-tRNA.

The protein resides in the cytoplasm. It functions in the pathway protein biosynthesis; polypeptide chain elongation. Functionally, involved in peptide bond synthesis. Alleviates ribosome stalling that occurs when 3 or more consecutive Pro residues or the sequence PPG is present in a protein, possibly by augmenting the peptidyl transferase activity of the ribosome. Modification of Lys-34 is required for alleviation. This Acinetobacter baumannii (strain AB307-0294) protein is Elongation factor P.